Consider the following 400-residue polypeptide: Large envelope protein (400 aa).

Met-1 bears the N-acetylmethionine mark. Disordered stretches follow at residues 1–20 (MGGW…SVPN) and 89–115 (STIP…LRDS). A lipid anchor (N-myristoyl glycine; by host) is attached at Gly-2. The pre-S1 stretch occupies residues 2-119 (GGWSSKPRKG…PPLRDSHPQA (118 aa)). The pre-S stretch occupies residues 2 to 174 (GGWSSKPRKG…SARTGDPVTN (173 aa)). Topologically, residues 2 to 181 (GGWSSKPRKG…VTNMENITSG (180 aa)) are virion surface; in external conformation. Residues 2–253 (GGWSSKPRKG…PGYRWMCLRR (252 aa)) are Intravirion; in internal conformation-facing. Trp-4 is a glycosylation site (N-linked (GlcNAc...) asparagine). Polar residues predominate over residues 89–106 (STIPPPASTNRQSGRQPT). The segment at 120–174 (MQWNSTAFHQTLQDPRVRGLYLPAGGSSSGTVNPAPNIASHISSISARTGDPVTN) is pre-S2. The chain crosses the membrane as a helical span at residues 182-202 (FLGPLLVLQAGFFLLTRILTI). Topologically, residues 203-253 (PQSLDSWWTSLNFLGGSPVCLGQNSQSPTSNHSPTSCPPICPGYRWMCLRR) are intravirion; in external conformation. The chain crosses the membrane as a helical span at residues 254–274 (FIIFLFILLLCLIFLLVLLDY). The Virion surface portion of the chain corresponds to 275–348 (QGMLPVCPLI…WASVRFSWLS (74 aa)). Asn-320 carries an N-linked (GlcNAc...) asparagine; by host; partial glycan. A helical membrane pass occupies residues 349–369 (LLVPFVQWFVGLSPTVWLSAI). Residues 370 to 375 (WMMWYW) lie on the Intravirion side of the membrane. A helical membrane pass occupies residues 376 to 398 (GPSLYSIVSPFIPLLPIFFCLWV). The Virion surface segment spans residues 399–400 (YI).

It belongs to the orthohepadnavirus major surface antigen family. In its internal form (Li-HBsAg), interacts with the capsid protein and with the isoform S. Interacts with host chaperone CANX. In terms of assembly, associates with host chaperone CANX through its pre-S2 N glycan; this association may be essential for isoform M proper secretion. As to quaternary structure, interacts with isoform L. Interacts with the antigens of satellite virus HDV (HDVAgs); this interaction is required for encapsidation of HDV genomic RNA. Post-translationally, isoform M is N-terminally acetylated by host at a ratio of 90%, and N-glycosylated by host at the pre-S2 region. Myristoylated.

The protein resides in the virion membrane. In terms of biological role, the large envelope protein exists in two topological conformations, one which is termed 'external' or Le-HBsAg and the other 'internal' or Li-HBsAg. In its external conformation the protein attaches the virus to cell receptors and thereby initiating infection. This interaction determines the species specificity and liver tropism. This attachment induces virion internalization predominantly through caveolin-mediated endocytosis. The large envelope protein also assures fusion between virion membrane and endosomal membrane. In its internal conformation the protein plays a role in virion morphogenesis and mediates the contact with the nucleocapsid like a matrix protein. Functionally, the middle envelope protein plays an important role in the budding of the virion. It is involved in the induction of budding in a nucleocapsid independent way. In this process the majority of envelope proteins bud to form subviral lipoprotein particles of 22 nm of diameter that do not contain a nucleocapsid. This Hepatitis B virus genotype A2 subtype adw2 (strain Rutter 1979) (HBV-A) protein is Large envelope protein.